We begin with the raw amino-acid sequence, 532 residues long: 2,3-bisphosphoglycerate-independent phosphoglycerate mutase (532 aa).

Mn(2+)-binding residues include Asp15 and Ser65. Ser65 (phosphoserine intermediate) is an active-site residue. Substrate contacts are provided by residues His126, 156 to 157 (RD), Arg188, Arg194, 258 to 261 (RPDR), and Lys331. Residues Asp398, His402, Asp439, His440, and His457 each coordinate Mn(2+).

It belongs to the BPG-independent phosphoglycerate mutase family. As to quaternary structure, monomer. Mn(2+) is required as a cofactor.

The enzyme catalyses (2R)-2-phosphoglycerate = (2R)-3-phosphoglycerate. It participates in carbohydrate degradation; glycolysis; pyruvate from D-glyceraldehyde 3-phosphate: step 3/5. In terms of biological role, catalyzes the interconversion of 2-phosphoglycerate and 3-phosphoglycerate. The chain is 2,3-bisphosphoglycerate-independent phosphoglycerate mutase from Cyanothece sp. (strain PCC 7425 / ATCC 29141).